Here is a 148-residue protein sequence, read N- to C-terminus: Snaclec 2 (148 aa).

A signal peptide spans 1-23 (MGRFIFVSFGLLVVFLSLSGTEA). Intrachain disulfides connect C27-C38, C55-C144, and C121-C136. The C-type lectin domain occupies 34 to 145 (YDQNCYKAFE…CSGTHSFVCK (112 aa)).

Belongs to the snaclec family. As to quaternary structure, heterodimer; disulfide-linked. Expressed by the venom gland.

It is found in the secreted. In terms of biological role, interferes with one step of hemostasis (modulation of platelet aggregation, or coagulation cascade, for example). The protein is Snaclec 2 of Echis ocellatus (Ocellated saw-scaled viper).